We begin with the raw amino-acid sequence, 1026 residues long: Phosphoenolpyruvate carboxylase (1026 aa).

Active-site residues include His199 and Lys672.

Belongs to the PEPCase type 1 family. It depends on Mg(2+) as a cofactor.

It catalyses the reaction oxaloacetate + phosphate = phosphoenolpyruvate + hydrogencarbonate. Forms oxaloacetate, a four-carbon dicarboxylic acid source for the tricarboxylic acid cycle. This is Phosphoenolpyruvate carboxylase (ppc) from Nostoc sp. (strain PCC 7120 / SAG 25.82 / UTEX 2576).